A 266-amino-acid polypeptide reads, in one-letter code: MVRNPMASAVESTLKTKAQTSNLSFYYGAIQALKNIHLTLAEHRVTALIGPSGCGKTTYLRCFNRMHDLYPGNRYEGQILLYPDEVNIVGPEVDPIEVRMRVSMVFQKPNPFPKSVYENVAYGLRVRGVRNRAELDEKVERALRQAALWEEVKDRLASLAFNLSGGQQQRLCIARALASEPEIILFDEPTSALDPLATLKIEELMGKLKQSITILIVTHNMQQAARISDFTAFMYLGEVIESGQTNQMFDHPTNQLTEQYVAGHFG.

In terms of domain architecture, ABC transporter spans 18–261 (AQTSNLSFYY…PTNQLTEQYV (244 aa)). 50–57 (GPSGCGKT) is an ATP binding site.

Belongs to the ABC transporter superfamily. Phosphate importer (TC 3.A.1.7) family. In terms of assembly, the complex is composed of two ATP-binding proteins (PstB), two transmembrane proteins (PstC and PstA) and a solute-binding protein (PstS).

It localises to the cell inner membrane. The catalysed reaction is phosphate(out) + ATP + H2O = ADP + 2 phosphate(in) + H(+). Part of the ABC transporter complex PstSACB involved in phosphate import. Responsible for energy coupling to the transport system. The chain is Phosphate import ATP-binding protein PstB 1 from Gloeobacter violaceus (strain ATCC 29082 / PCC 7421).